Consider the following 204-residue polypeptide: Urease accessory protein UreG (204 aa).

Position 12–19 (12–19 (GPVGSGKT)) interacts with GTP.

The protein belongs to the SIMIBI class G3E GTPase family. UreG subfamily. As to quaternary structure, homodimer. UreD, UreF and UreG form a complex that acts as a GTP-hydrolysis-dependent molecular chaperone, activating the urease apoprotein by helping to assemble the nickel containing metallocenter of UreC. The UreE protein probably delivers the nickel.

It is found in the cytoplasm. Functionally, facilitates the functional incorporation of the urease nickel metallocenter. This process requires GTP hydrolysis, probably effectuated by UreG. The chain is Urease accessory protein UreG from Ectopseudomonas mendocina (strain ymp) (Pseudomonas mendocina).